A 485-amino-acid polypeptide reads, in one-letter code: Protein LAZ1 (485 aa).

At 1-19 (MDILKSYHLLAAAYSAPAW) the chain is on the cytoplasmic side. A helical transmembrane segment spans residues 20–40 (ASFMAGAFLVLTLSLSLFLVF). Residues 41 to 53 (DHLSTYKNPEEQK) are Lumenal-facing. A helical membrane pass occupies residues 54 to 74 (FLIGVILMVPCYSIESFASLV). The Cytoplasmic segment spans residues 75-167 (KPSISVDCGI…QVVKFGIVQY (93 aa)). Residues 168 to 188 (MIIKSLTALTALILEAFGVYC) form a helical membrane-spanning segment. Over 189–196 (EGEFKWGC) the chain is Lumenal. Residues 197 to 217 (GYPYLAVVLNFSQSWALYCLV) form a helical membrane-spanning segment. At 218–241 (QFYGATKDELAHIQPLAKFLTFKS) the chain is on the cytoplasmic side. A helical membrane pass occupies residues 242-262 (IVFLTWWQGVAIALLSSLGLF). Residues 263–277 (KSSIAQSLQLKTSVQ) are Lumenal-facing. A helical membrane pass occupies residues 278–298 (DFIICIEMGIASVVHLYVFPA). At 299-485 (KPYGLMGDRF…VRGRRWITKD (187 aa)) the chain is on the cytoplasmic side. Residues 384 to 415 (MEKSITKFNEKLHKISQNIKKHDKEKRRVKDD) are a coiled coil. Residues 400 to 485 (QNIKKHDKEK…VRGRRWITKD (86 aa)) are disordered. Over residues 403–416 (KKHDKEKRRVKDDS) the composition is skewed to basic and acidic residues. Over residues 455 to 469 (GYTSAESGGESSSDQ) the composition is skewed to polar residues. Positions 476 to 485 (VRGRRWITKD) are enriched in basic and acidic residues.

Belongs to the TMEM184 family.

The protein resides in the endomembrane system. It is found in the cell membrane. The protein localises to the cytoplasm. It localises to the cytosol. Functionally, required for programmed cell death (PCD) associated with hypersensitive response (HR). Involved both in the induction of EDS1/PAD4 mediated HR and in accelerated cell death in the acd11 mutant. Not required for HR induction elicited through pathways exclusively dependent on CC-NB-LRR resistance proteins. This chain is Protein LAZ1, found in Arabidopsis thaliana (Mouse-ear cress).